The chain runs to 343 residues: Heat-inducible transcription repressor HrcA (343 aa).

It belongs to the HrcA family.

Functionally, negative regulator of class I heat shock genes (grpE-dnaK-dnaJ and groELS operons). Prevents heat-shock induction of these operons. The sequence is that of Heat-inducible transcription repressor HrcA from Bacillus subtilis (strain 168).